A 449-amino-acid polypeptide reads, in one-letter code: Signal recognition particle protein (449 aa).

Residues 109–116 (GLQGSGKT), 191–195 (DTAGR), and 249–252 (SRID) each bind GTP.

The protein belongs to the GTP-binding SRP family. SRP54 subfamily. Part of the signal recognition particle protein translocation system, which is composed of SRP and FtsY. SRP is a ribonucleoprotein composed of Ffh and a 4.5S RNA molecule.

It localises to the cytoplasm. It catalyses the reaction GTP + H2O = GDP + phosphate + H(+). Involved in targeting and insertion of nascent membrane proteins into the cytoplasmic membrane. Binds to the hydrophobic signal sequence of the ribosome-nascent chain (RNC) as it emerges from the ribosomes. The SRP-RNC complex is then targeted to the cytoplasmic membrane where it interacts with the SRP receptor FtsY. Interaction with FtsY leads to the transfer of the RNC complex to the Sec translocase for insertion into the membrane, the hydrolysis of GTP by both Ffh and FtsY, and the dissociation of the SRP-FtsY complex into the individual components. This Rickettsia felis (strain ATCC VR-1525 / URRWXCal2) (Rickettsia azadi) protein is Signal recognition particle protein.